Reading from the N-terminus, the 627-residue chain is Meiosis-specific transcription factor NDT80 (627 aa).

The segment at residues 28-335 (EEDTPVILTQ…RSPSNYASSQ (308 aa)) is a DNA-binding region (NDT80). Residues 324–410 (RGRSPSNYAS…MEASKENEDP (87 aa)) form a disordered region. Polar residues-rich tracts occupy residues 327 to 351 (SPSN…SQNS) and 386 to 401 (SGAS…STPM).

As to quaternary structure, binds to DNA as a monomer. Phosphorylated by pachytene checkpoint kinase IME2, but also phosphorylated in an IME2-independent manner. Phosphorylation probably eliminates SUM1-mediated repression and is also required for full transcriptional activation activity. Phosphorylation of the DNA-binding domain by IME2 does not alter DNA binding affinity.

Its subcellular location is the nucleus. Its function is as follows. Transcription factor required for successful completion of meiosis and spore formation. Gets activated after completion of meiotic recombination at the end of prophase I. Recognizes and binds to the middle sporulation element (MSE) 5'-C[AG]CAAA[AT]-3' in the promoter region of stage-specific genes that are required for progression through meiosis and sporulation. Competes for binding to MSE with the transcriptional repressor SUM1, which represses middle sporulation-specific genes during mitosis and early sporulation. This Saccharomyces cerevisiae (strain ATCC 204508 / S288c) (Baker's yeast) protein is Meiosis-specific transcription factor NDT80 (NDT80).